Reading from the N-terminus, the 83-residue chain is Large ribosomal subunit protein eL31 (83 aa).

This sequence belongs to the eukaryotic ribosomal protein eL31 family.

The chain is Large ribosomal subunit protein eL31 from Methanococcus maripaludis (strain DSM 14266 / JCM 13030 / NBRC 101832 / S2 / LL).